The sequence spans 193 residues: Putative 3-methyladenine DNA glycosylase (193 aa).

This sequence belongs to the DNA glycosylase MPG family.

This chain is Putative 3-methyladenine DNA glycosylase, found in Francisella tularensis subsp. tularensis (strain FSC 198).